Here is a 110-residue protein sequence, read N- to C-terminus: Transcription factor S (110 aa).

The Zn(2+) site is built by C4, C7, C22, C25, C71, C74, C99, and C102. Residues 4 to 25 form a C4-type zinc finger; sequence CPKCGNLMLPDRKRKVWVCRSC. Residues 67–107 form a TFIIS-type zinc finger; that stretch reads TKITCPKCGNDTAYWWEMQTRAGDEPSTIFYKCTKCGHTWR.

Belongs to the archaeal RpoM/eukaryotic RPA12/RPB9/RPC11 RNA polymerase family.

Its function is as follows. Induces RNA cleavage activity in the RNA polymerase. In its presence, the cleavage activity of the RNA polymerase truncates the RNA back to position +15 in a stepwise manner by releasing mainly dinucleotides from the 3'-end of the nascent RNA. The truncated RNAs are able to continue elongation. Involved in transcriptional proofreading and fidelity. Misincorporation of nucleotides during elongation of transcription leads to arrested elongation complexes which are rescued by TFS-promoted removal of a dinucleotide from the 3'-end. TFS is able to induce a cleavage resynthesis cycle in stalled elongation complexes (resulting from the next missing nucleotide or a reduced incorporation rate of a wrong nucleotide) preventing misincorporation and enabling proofreading in a post-incorporation manner. Pausing of elongation complexes is the main determinant of TFS-induced RNA cleavage. The protein is Transcription factor S of Thermococcus celer.